A 122-amino-acid polypeptide reads, in one-letter code: Large ribosomal subunit protein uL14 (122 aa).

It belongs to the universal ribosomal protein uL14 family. In terms of assembly, part of the 50S ribosomal subunit. Forms a cluster with proteins L3 and L19. In the 70S ribosome, L14 and L19 interact and together make contacts with the 16S rRNA in bridges B5 and B8.

Functionally, binds to 23S rRNA. Forms part of two intersubunit bridges in the 70S ribosome. This chain is Large ribosomal subunit protein uL14, found in Shouchella clausii (strain KSM-K16) (Alkalihalobacillus clausii).